A 624-amino-acid chain; its full sequence is Membrane protein insertase YidC (624 aa).

A helical membrane pass occupies residues 8-28; the sequence is MIIAIALSLAVLLGWNYFVTA. Positions 36-95 are disordered; that stretch reads QQQAAQVNPSQGVNPSQGVDPSQGVNASPSPKEGGPSAPVPGTLPGAAGGSPQAALARDE. A compositionally biased stretch (polar residues) spans 43-64; that stretch reads NPSQGVNPSQGVDPSQGVNASP. Helical transmembrane passes span 370 to 390, 396 to 416, 470 to 490, 526 to 542, and 559 to 579; these read FDLL…FKAL, LFGN…LFFL, WPVL…FVTI, LLHL…TMFL, and FTFM…GLVI.

This sequence belongs to the OXA1/ALB3/YidC family. Type 1 subfamily. In terms of assembly, interacts with the Sec translocase complex via SecD. Specifically interacts with transmembrane segments of nascent integral membrane proteins during membrane integration.

The protein resides in the cell inner membrane. In terms of biological role, required for the insertion and/or proper folding and/or complex formation of integral membrane proteins into the membrane. Involved in integration of membrane proteins that insert both dependently and independently of the Sec translocase complex, as well as at least some lipoproteins. Aids folding of multispanning membrane proteins. This Methylobacterium sp. (strain 4-46) protein is Membrane protein insertase YidC.